The chain runs to 320 residues: Aspartate carbamoyltransferase catalytic subunit (320 aa).

Carbamoyl phosphate is bound by residues Arg53 and Thr54. Lys82 contacts L-aspartate. Positions 103, 131, and 134 each coordinate carbamoyl phosphate. Positions 164 and 227 each coordinate L-aspartate. 2 residues coordinate carbamoyl phosphate: Leu266 and Pro267.

It belongs to the aspartate/ornithine carbamoyltransferase superfamily. ATCase family. In terms of assembly, heterododecamer (2C3:3R2) of six catalytic PyrB chains organized as two trimers (C3), and six regulatory PyrI chains organized as three dimers (R2).

It catalyses the reaction carbamoyl phosphate + L-aspartate = N-carbamoyl-L-aspartate + phosphate + H(+). Its pathway is pyrimidine metabolism; UMP biosynthesis via de novo pathway; (S)-dihydroorotate from bicarbonate: step 2/3. Its function is as follows. Catalyzes the condensation of carbamoyl phosphate and aspartate to form carbamoyl aspartate and inorganic phosphate, the committed step in the de novo pyrimidine nucleotide biosynthesis pathway. The polypeptide is Aspartate carbamoyltransferase catalytic subunit (Bifidobacterium longum (strain NCC 2705)).